Consider the following 435-residue polypeptide: Transmembrane protein 130 (435 aa).

The first 24 residues, 1 to 24 (MAQAVWSRLGRILWLACLLPWAPA), serve as a signal peptide directing secretion. Topologically, residues 25 to 339 (GVAAGLYELN…IQVWPSRIQP (315 aa)) are extracellular. 3 N-linked (GlcNAc...) asparagine glycosylation sites follow: N34, N197, and N300. Positions 147–233 (WPSSYLTKTV…AVKQKTGDFS (87 aa)) constitute a PKD domain. A helical transmembrane segment spans residues 340 to 360 (AVFAFPCATLITVMLAFIMYM). The Cytoplasmic portion of the chain corresponds to 361–435 (TLRNATQQKD…LYKSVKTYTV (75 aa)).

Its subcellular location is the golgi apparatus membrane. In Homo sapiens (Human), this protein is Transmembrane protein 130 (TMEM130).